A 273-amino-acid chain; its full sequence is Outer surface protein A (273 aa).

A signal peptide spans 1 to 16; it reads MKKYLLGIGLILALIA. Residue Cys-17 is the site of N-palmitoyl cysteine attachment. Cys-17 carries the S-diacylglycerol cysteine lipid modification.

The protein belongs to the OspA lipoprotein family.

It localises to the cell outer membrane. The protein localises to the cell surface. The sequence is that of Outer surface protein A from Borreliella burgdorferi (Lyme disease spirochete).